Consider the following 436-residue polypeptide: Histidinol dehydrogenase (436 aa).

3 residues coordinate substrate: threonine 240, glutamine 262, and histidine 265. Glutamine 262 and histidine 265 together coordinate Zn(2+). Active-site proton acceptor residues include glutamate 331 and histidine 332. 4 residues coordinate substrate: histidine 332, aspartate 365, glutamate 419, and histidine 424. Aspartate 365 is a Zn(2+) binding site. Zn(2+) is bound at residue histidine 424.

The protein belongs to the histidinol dehydrogenase family. The cofactor is Zn(2+).

The catalysed reaction is L-histidinol + 2 NAD(+) + H2O = L-histidine + 2 NADH + 3 H(+). It functions in the pathway amino-acid biosynthesis; L-histidine biosynthesis; L-histidine from 5-phospho-alpha-D-ribose 1-diphosphate: step 9/9. Its function is as follows. Catalyzes the sequential NAD-dependent oxidations of L-histidinol to L-histidinaldehyde and then to L-histidine. The chain is Histidinol dehydrogenase from Leifsonia xyli subsp. xyli (strain CTCB07).